Consider the following 183-residue polypeptide: Large ribosomal subunit protein uL6 (183 aa).

Belongs to the universal ribosomal protein uL6 family. As to quaternary structure, part of the 50S ribosomal subunit.

In terms of biological role, this protein binds to the 23S rRNA, and is important in its secondary structure. It is located near the subunit interface in the base of the L7/L12 stalk, and near the tRNA binding site of the peptidyltransferase center. The protein is Large ribosomal subunit protein uL6 of Ruminiclostridium cellulolyticum (strain ATCC 35319 / DSM 5812 / JCM 6584 / H10) (Clostridium cellulolyticum).